A 121-amino-acid chain; its full sequence is Nitrogenase-stabilizing/protective protein NifW (121 aa).

Belongs to the NifW family. In terms of assembly, homotrimer; associates with NifD.

Functionally, may protect the nitrogenase Fe-Mo protein from oxidative damage. The polypeptide is Nitrogenase-stabilizing/protective protein NifW (Leptothrix cholodnii (strain ATCC 51168 / LMG 8142 / SP-6) (Leptothrix discophora (strain SP-6))).